A 128-amino-acid chain; its full sequence is UPF0102 protein Mext_0406 (128 aa).

Belongs to the UPF0102 family.

The chain is UPF0102 protein Mext_0406 from Methylorubrum extorquens (strain PA1) (Methylobacterium extorquens).